Reading from the N-terminus, the 252-residue chain is Ditrans,polycis-undecaprenyl-diphosphate synthase ((2E,6E)-farnesyl-diphosphate specific) (252 aa).

The active site involves Asp-25. Asp-25 provides a ligand contact to Mg(2+). Substrate contacts are provided by residues 26–29 (GNGR), Trp-30, Arg-38, His-42, and 70–72 (SSE). The active-site Proton acceptor is the Asn-73. Residues Trp-74, Arg-76, and Arg-193 each coordinate substrate. Residue His-198 coordinates Mg(2+). Residue 199–201 (RIS) participates in substrate binding. Glu-212 provides a ligand contact to Mg(2+).

The protein belongs to the UPP synthase family. As to quaternary structure, homodimer. The cofactor is Mg(2+).

It carries out the reaction 8 isopentenyl diphosphate + (2E,6E)-farnesyl diphosphate = di-trans,octa-cis-undecaprenyl diphosphate + 8 diphosphate. Its function is as follows. Catalyzes the sequential condensation of isopentenyl diphosphate (IPP) with (2E,6E)-farnesyl diphosphate (E,E-FPP) to yield (2Z,6Z,10Z,14Z,18Z,22Z,26Z,30Z,34E,38E)-undecaprenyl diphosphate (di-trans,octa-cis-UPP). UPP is the precursor of glycosyl carrier lipid in the biosynthesis of bacterial cell wall polysaccharide components such as peptidoglycan and lipopolysaccharide. In Salmonella paratyphi A (strain ATCC 9150 / SARB42), this protein is Ditrans,polycis-undecaprenyl-diphosphate synthase ((2E,6E)-farnesyl-diphosphate specific).